Reading from the N-terminus, the 263-residue chain is Small ribosomal subunit protein eS4, Y isoform 2 (263 aa).

The S4 RNA-binding domain occupies 42 to 104 (LPLIVFLRNR…TGEHFRLVYD (63 aa)).

This sequence belongs to the eukaryotic ribosomal protein eS4 family.

This chain is Small ribosomal subunit protein eS4, Y isoform 2 (RPS4Y2), found in Pan troglodytes (Chimpanzee).